Consider the following 292-residue polypeptide: Acetylglutamate kinase (292 aa).

Substrate is bound by residues 64–65 (GG), Arg86, and Asn190.

The protein belongs to the acetylglutamate kinase family. ArgB subfamily.

The protein resides in the cytoplasm. It carries out the reaction N-acetyl-L-glutamate + ATP = N-acetyl-L-glutamyl 5-phosphate + ADP. The protein operates within amino-acid biosynthesis; L-arginine biosynthesis; N(2)-acetyl-L-ornithine from L-glutamate: step 2/4. Its function is as follows. Catalyzes the ATP-dependent phosphorylation of N-acetyl-L-glutamate. This Geobacter metallireducens (strain ATCC 53774 / DSM 7210 / GS-15) protein is Acetylglutamate kinase.